The primary structure comprises 921 residues: Probable serine/threonine-protein kinase DDB_G0275165 (921 aa).

Positions 23–277 constitute a Protein kinase domain; that stretch reads FDPLSIIGSG…SNILGLLEYI (255 aa). Residues 29 to 37 and Lys-50 contribute to the ATP site; that span reads IGSGGFGKV. Asp-147 serves as the catalytic Proton acceptor. Disordered stretches follow at residues 289–453, 465–492, 530–571, 583–653, 671–698, 737–813, 833–858, and 877–921; these read DYEP…SFPR, RGEE…NEED, RPWN…SDSN, NPTP…PTTI, STAT…SNNN, IQPL…SRSL, SSQQ…TSQF, and FEKS…KPKK. 3 stretches are compositionally biased toward low complexity: residues 310–352, 400–412, and 429–445; these read NNNN…NNNN, SNIN…NNSN, and NING…NNNN. Composition is skewed to low complexity over residues 539–550 and 583–638; these read NNNNKNNNNNEK and NPTP…SLSS. Residues 643-653 are compositionally biased toward polar residues; that stretch reads PQSTYKVPTTI. Low complexity-rich tracts occupy residues 748 to 775, 842 to 857, and 892 to 910; these read TVAA…PTST, QPSS…PTSQ, and TSSS…PSSP.

This sequence belongs to the protein kinase superfamily. TKL Ser/Thr protein kinase family.

The catalysed reaction is L-seryl-[protein] + ATP = O-phospho-L-seryl-[protein] + ADP + H(+). It catalyses the reaction L-threonyl-[protein] + ATP = O-phospho-L-threonyl-[protein] + ADP + H(+). The protein is Probable serine/threonine-protein kinase DDB_G0275165 of Dictyostelium discoideum (Social amoeba).